The following is a 468-amino-acid chain: Eukaryotic translation initiation factor 3 subunit M (468 aa).

The disordered stretch occupies residues 42 to 61; the sequence is PLIEPLRQQEQSEEEPDRKQ. A PCI domain is found at 206 to 377; that stretch reads DLELAQTHVV…SEFLVHRATY (172 aa). The segment at 418–468 is disordered; sequence MQAAAEETGQGKSGDKGAKGGDRRRNPQQQQQSQPSQPQQAREVELVGGAE. Basic and acidic residues predominate over residues 430–442; the sequence is SGDKGAKGGDRRR. Over residues 444–457 the composition is skewed to low complexity; sequence PQQQQQSQPSQPQQ.

It belongs to the eIF-3 subunit M family. Component of the eukaryotic translation initiation factor 3 (eIF-3) complex.

Its subcellular location is the cytoplasm. In terms of biological role, component of the eukaryotic translation initiation factor 3 (eIF-3) complex, which is involved in protein synthesis of a specialized repertoire of mRNAs and, together with other initiation factors, stimulates binding of mRNA and methionyl-tRNAi to the 40S ribosome. The eIF-3 complex specifically targets and initiates translation of a subset of mRNAs involved in cell proliferation. The sequence is that of Eukaryotic translation initiation factor 3 subunit M from Neosartorya fischeri (strain ATCC 1020 / DSM 3700 / CBS 544.65 / FGSC A1164 / JCM 1740 / NRRL 181 / WB 181) (Aspergillus fischerianus).